The chain runs to 510 residues: Coatomer subunit delta (510 aa).

Positions 270–510 (MESVHMKIEE…TFLVDKYEIL (241 aa)) constitute an MHD domain.

This sequence belongs to the adaptor complexes medium subunit family. Delta-COP subfamily. As to quaternary structure, oligomeric complex that consists of at least the alpha, beta, beta', gamma, delta, epsilon and zeta subunits.

Its subcellular location is the cytoplasm. It localises to the golgi apparatus membrane. The protein resides in the cytoplasmic vesicle. The protein localises to the COPI-coated vesicle membrane. The coatomer is a cytosolic protein complex that binds to dilysine motifs and reversibly associates with Golgi non-clathrin-coated vesicles, which further mediate biosynthetic protein transport from the ER, via the Golgi up to the trans Golgi network. Coatomer complex is required for budding from Golgi membranes, and is essential for the retrograde Golgi-to-ER transport of dilysine-tagged proteins. In mammals, the coatomer can only be recruited by membranes associated to ADP-ribosylation factors (ARFs), which are small GTP-binding proteins; the complex also influences the Golgi structural integrity, as well as the processing, activity, and endocytic recycling of LDL receptors. The protein is Coatomer subunit delta (ARCN1) of Gallus gallus (Chicken).